The sequence spans 338 residues: D-alanine--D-alanine ligase (338 aa).

An ATP-grasp domain is found at 120-324; the sequence is KRVMLAEGLP…YEDLCIEVLK (205 aa). 150-205 is an ATP binding site; it reads PDKLGLPLIVKPAREGSSIGLTKVTERAGMADAVAQAEKLDADILCEQFISGDEVT. The Mg(2+) site is built by Asp-277, Glu-291, and Asn-293.

Belongs to the D-alanine--D-alanine ligase family. Mg(2+) is required as a cofactor. Mn(2+) serves as cofactor.

It is found in the cytoplasm. It carries out the reaction 2 D-alanine + ATP = D-alanyl-D-alanine + ADP + phosphate + H(+). It functions in the pathway cell wall biogenesis; peptidoglycan biosynthesis. In terms of biological role, cell wall formation. In Polaromonas sp. (strain JS666 / ATCC BAA-500), this protein is D-alanine--D-alanine ligase.